The sequence spans 901 residues: Serine/threonine-protein kinase-like protein CR4 (901 aa).

Positions 1 to 22 (MDIVPVVALCCCLVLLPSWAYG) are cleaved as a signal peptide. 7 tandem repeats follow at residues 31 to 66 (VSYGEDGPVFCGLNSDGSHLVTCFGADASVVYGAPS), 70 to 105 (FVGVTAGDGFACGLLLDTNQPYCWGSNSYVKIGVPQ), 123 to 158 (LCALRTSVKGFHSVNGDTSVIDCWGYNMTATHTVTG), 160 to 193 (VSAISAGSVFNCGLFARNRTVFCWGDESVSGVIG), 201 to 234 (FQSIGAGGYHVCGVLENAQVFCWGRSLEMQQMST), 251 to 285 (MVSVVGGRFHACGIRSLDHQVACWGFTLQNSTLAP), and 290 to 328 (VYAIVAGDYFTCGVPAETSLKPMCWGHSGPLALPMAVSP). The segment at 31 to 328 (VSYGEDGPVF…PLALPMAVSP (298 aa)) is 7 X 36 AA repeats. N-linked (GlcNAc...) asparagine glycosylation is found at Asn-149 and Asn-177. N-linked (GlcNAc...) asparagine glycosylation is present at Asn-280. Residues 335-389 (SCSHGYYEYANHGEVGSGSKTCKPANSRLCLPCSVGCPDDSYESSPCNATADRVC) form a TNFR-Cys repeat. 3 cysteine pairs are disulfide-bonded: Cys-336–Cys-364, Cys-367–Cys-381, and Cys-371–Cys-389. Asn-382 is a glycosylation site (N-linked (GlcNAc...) asparagine). A helical membrane pass occupies residues 423 to 443 (IFVAEIAFAVILVFSVTAIAC). The 278-residue stretch at 504-781 (FSEDSQVGKG…KVTTALERAL (278 aa)) folds into the Protein kinase domain. ATP contacts are provided by residues 510-518 (VGKGSFSCV) and Lys-532. Asp-633 functions as the Proton acceptor in the catalytic mechanism. The interval 845-901 (VTSSQRRKSSASEADMDGRTTTDGRNVGSSIGDGLRSLEEEISPASPQENLYLQHNF) is disordered. Positions 889-901 (ASPQENLYLQHNF) are enriched in polar residues.

Belongs to the protein kinase superfamily. Ser/Thr protein kinase family. Homodimer. In terms of processing, autophosphorylated. In terms of tissue distribution, specifically expressed in the epidermal cells of paleas and lemmas.

It localises to the cell membrane. The protein localises to the endosome. The protein resides in the multivesicular body membrane. It carries out the reaction L-seryl-[protein] + ATP = O-phospho-L-seryl-[protein] + ADP + H(+). It catalyses the reaction L-threonyl-[protein] + ATP = O-phospho-L-threonyl-[protein] + ADP + H(+). Functionally, receptor protein kinase. Could play a role in a differentiation signal. Controls formative cell division in meristems. Regulates epidermal cell differentiation in many organs. During floral organogenesis, required to maintain the interlocking of the palea and lemma, and fertility. Triggers culm elongation. The polypeptide is Serine/threonine-protein kinase-like protein CR4 (Oryza sativa subsp. japonica (Rice)).